Reading from the N-terminus, the 346-residue chain is Biotin synthase (346 aa).

Residues 38–256 (QQVQVSTLLS…IAVARIMMPT (219 aa)) enclose the Radical SAM core domain. Cysteine 53, cysteine 57, and cysteine 60 together coordinate [4Fe-4S] cluster. Cysteine 97, cysteine 128, cysteine 188, and arginine 260 together coordinate [2Fe-2S] cluster.

It belongs to the radical SAM superfamily. Biotin synthase family. In terms of assembly, homodimer. It depends on [4Fe-4S] cluster as a cofactor. The cofactor is [2Fe-2S] cluster.

The catalysed reaction is (4R,5S)-dethiobiotin + (sulfur carrier)-SH + 2 reduced [2Fe-2S]-[ferredoxin] + 2 S-adenosyl-L-methionine = (sulfur carrier)-H + biotin + 2 5'-deoxyadenosine + 2 L-methionine + 2 oxidized [2Fe-2S]-[ferredoxin]. The protein operates within cofactor biosynthesis; biotin biosynthesis; biotin from 7,8-diaminononanoate: step 2/2. Its function is as follows. Catalyzes the conversion of dethiobiotin (DTB) to biotin by the insertion of a sulfur atom into dethiobiotin via a radical-based mechanism. This chain is Biotin synthase, found in Salmonella dublin (strain CT_02021853).